We begin with the raw amino-acid sequence, 272 residues long: uncharacterized protein (272 aa).

This is an uncharacterized protein from Archaeoglobus fulgidus (strain ATCC 49558 / DSM 4304 / JCM 9628 / NBRC 100126 / VC-16).